The sequence spans 47 residues: Delta-actitoxin-Cgg1b (47 aa).

The residue at position 3 (proline 3) is a Hydroxyproline. 3 disulfide bridges follow: cysteine 4–cysteine 44, cysteine 6–cysteine 34, and cysteine 27–cysteine 45.

It belongs to the sea anemone sodium channel inhibitory toxin family. Type I subfamily.

The protein localises to the secreted. The protein resides in the nematocyst. Functionally, binds voltage-dependently at site 3 of sodium channels (Nav) and inhibits the inactivation, thereby blocking neuronal transmission. The protein is Delta-actitoxin-Cgg1b of Condylactis gigantea (Giant Caribbean anemone).